Here is a 484-residue protein sequence, read N- to C-terminus: Probable glycine dehydrogenase (decarboxylating) subunit 2 (484 aa).

Residue Lys264 is modified to N6-(pyridoxal phosphate)lysine.

It belongs to the GcvP family. C-terminal subunit subfamily. The glycine cleavage system is composed of four proteins: P, T, L and H. In this organism, the P 'protein' is a heterodimer of two subunits. Requires pyridoxal 5'-phosphate as cofactor.

It catalyses the reaction N(6)-[(R)-lipoyl]-L-lysyl-[glycine-cleavage complex H protein] + glycine + H(+) = N(6)-[(R)-S(8)-aminomethyldihydrolipoyl]-L-lysyl-[glycine-cleavage complex H protein] + CO2. In terms of biological role, the glycine cleavage system catalyzes the degradation of glycine. The P protein binds the alpha-amino group of glycine through its pyridoxal phosphate cofactor; CO(2) is released and the remaining methylamine moiety is then transferred to the lipoamide cofactor of the H protein. In Legionella pneumophila (strain Paris), this protein is Probable glycine dehydrogenase (decarboxylating) subunit 2.